We begin with the raw amino-acid sequence, 165 residues long: NADPH-dependent 7-cyano-7-deazaguanine reductase (165 aa).

Catalysis depends on Cys-56, which acts as the Thioimide intermediate. Asp-63 serves as the catalytic Proton donor. Substrate-binding positions include 78–80 (VES) and 97–98 (HE).

Belongs to the GTP cyclohydrolase I family. QueF type 1 subfamily.

It is found in the cytoplasm. It carries out the reaction 7-aminomethyl-7-carbaguanine + 2 NADP(+) = 7-cyano-7-deazaguanine + 2 NADPH + 3 H(+). It participates in tRNA modification; tRNA-queuosine biosynthesis. Its activity is regulated as follows. Is totally inhibited by 4-aminobenzylcyanide in vitro. Catalyzes the NADPH-dependent reduction of 7-cyano-7-deazaguanine (preQ0) to 7-aminomethyl-7-deazaguanine (preQ1), a late step in the queuosine pathway. Is highly specific for its natural substrate preQ0, since it cannot use various aliphatic, aromatic and heterocyclic nitriles, although it can reduce the substrate analog 5-cyanopyrrolo[2,3-d]pyrimidin-4-one with lesser efficiency. This chain is NADPH-dependent 7-cyano-7-deazaguanine reductase, found in Geobacillus kaustophilus (strain HTA426).